The primary structure comprises 302 residues: Serine/threonine-protein phosphatase alpha-2 isoform (302 aa).

Mn(2+) contacts are provided by Asp62, His64, Asp90, and Asn122. The Proton donor role is filled by His123. Mn(2+) is bound by residues His171 and His246.

This sequence belongs to the PPP phosphatase family. PP-1 subfamily. As to quaternary structure, interacts with Nop17l. Interacts with uri; uri inhibits Pp1-87B phosphatase activity. Interacts with Rif1. Mn(2+) is required as a cofactor.

The protein localises to the cytoplasm. It catalyses the reaction O-phospho-L-seryl-[protein] + H2O = L-seryl-[protein] + phosphate. The catalysed reaction is O-phospho-L-threonyl-[protein] + H2O = L-threonyl-[protein] + phosphate. Its function is as follows. Is essential for the regulation of mitotic chromosomal segregation as well as regulation of chromatin condensation during interphase. The polypeptide is Serine/threonine-protein phosphatase alpha-2 isoform (Pp1-87B) (Drosophila melanogaster (Fruit fly)).